The primary structure comprises 397 residues: Succinate--CoA ligase [ADP-forming] subunit beta (397 aa).

An ATP-grasp domain is found at 9–254 (KALLKGYGAP…ETEEDAKEIE (246 aa)). ATP is bound by residues K46, 53–55 (GRG), E109, A112, and E117. Mg(2+) is bound by residues N209 and D223. Residues N274 and 331 to 333 (GIM) contribute to the substrate site.

Belongs to the succinate/malate CoA ligase beta subunit family. Heterotetramer of two alpha and two beta subunits. The cofactor is Mg(2+).

It catalyses the reaction succinate + ATP + CoA = succinyl-CoA + ADP + phosphate. It carries out the reaction GTP + succinate + CoA = succinyl-CoA + GDP + phosphate. It functions in the pathway carbohydrate metabolism; tricarboxylic acid cycle; succinate from succinyl-CoA (ligase route): step 1/1. Functionally, succinyl-CoA synthetase functions in the citric acid cycle (TCA), coupling the hydrolysis of succinyl-CoA to the synthesis of either ATP or GTP and thus represents the only step of substrate-level phosphorylation in the TCA. The beta subunit provides nucleotide specificity of the enzyme and binds the substrate succinate, while the binding sites for coenzyme A and phosphate are found in the alpha subunit. The sequence is that of Succinate--CoA ligase [ADP-forming] subunit beta from Rhizobium etli (strain ATCC 51251 / DSM 11541 / JCM 21823 / NBRC 15573 / CFN 42).